A 216-amino-acid polypeptide reads, in one-letter code: 3-isopropylmalate dehydratase small subunit (216 aa).

The protein belongs to the LeuD family. LeuD type 1 subfamily. In terms of assembly, heterodimer of LeuC and LeuD.

It carries out the reaction (2R,3S)-3-isopropylmalate = (2S)-2-isopropylmalate. It participates in amino-acid biosynthesis; L-leucine biosynthesis; L-leucine from 3-methyl-2-oxobutanoate: step 2/4. In terms of biological role, catalyzes the isomerization between 2-isopropylmalate and 3-isopropylmalate, via the formation of 2-isopropylmaleate. This Albidiferax ferrireducens (strain ATCC BAA-621 / DSM 15236 / T118) (Rhodoferax ferrireducens) protein is 3-isopropylmalate dehydratase small subunit.